Consider the following 399-residue polypeptide: Glucose-1-phosphate adenylyltransferase (399 aa).

Residues Tyr100, Gly165, 180–181 (EK), and Ser191 contribute to the alpha-D-glucose 1-phosphate site.

It belongs to the bacterial/plant glucose-1-phosphate adenylyltransferase family. As to quaternary structure, homotetramer.

It carries out the reaction alpha-D-glucose 1-phosphate + ATP + H(+) = ADP-alpha-D-glucose + diphosphate. The protein operates within glycan biosynthesis; glycogen biosynthesis. Involved in the biosynthesis of ADP-glucose, a building block required for the elongation reactions to produce glycogen. Catalyzes the reaction between ATP and alpha-D-glucose 1-phosphate (G1P) to produce pyrophosphate and ADP-Glc. The protein is Glucose-1-phosphate adenylyltransferase of Desulforamulus reducens (strain ATCC BAA-1160 / DSM 100696 / MI-1) (Desulfotomaculum reducens).